The primary structure comprises 93 residues: Toxin RelE1 (93 aa).

This sequence belongs to the RelE toxin family.

Toxic component of a type II toxin-antitoxin (TA) system. Its toxic effect is neutralized by coexpression with cognate antitoxin RelB1 but no other ParD or RelB antitoxin. This Caulobacter vibrioides (strain ATCC 19089 / CIP 103742 / CB 15) (Caulobacter crescentus) protein is Toxin RelE1 (relE1).